The sequence spans 215 residues: Ras-related protein Rab-14 (215 aa).

Position 2 is an N-acetylalanine (alanine 2). Positions 21, 22, 23, 24, 25, 26, 38, 39, 40, 42, and 43 each coordinate GTP. Serine 25 is a Mg(2+) binding site. Residues 42-47 carry the Switch 1 motif; the sequence is HTIGVE. Threonine 43 and aspartate 66 together coordinate Mg(2+). The Switch 2 signature appears at 68-77; it reads AGQERFRAVT. GTP-binding residues include glycine 69, asparagine 124, lysine 125, aspartate 127, alanine 155, and lysine 156. A disordered region spans residues 188–215; that stretch reads SGVQHKPSAPQGGRLTSEPQPQREGCGC. S-geranylgeranyl cysteine attachment occurs at residues cysteine 213 and cysteine 215. Cysteine 215 is subject to Cysteine methyl ester.

The protein belongs to the small GTPase superfamily. Rab family. As to quaternary structure, interacts with ZFYVE20. Interacts with KIF16B. Interacts (GTP-bound form) with RUFY1; the interaction recruits RUFY1 onto endosomal membranes. Interacts (GTP-bound form) with RAB11FIP1 (via its C-terminus); the interactions doesn't mediate RAB11FIP1 rectruitment to membranes. Interacts with RAB11FIP2. Mg(2+) serves as cofactor.

The protein resides in the recycling endosome. The protein localises to the early endosome membrane. It is found in the golgi apparatus membrane. Its subcellular location is the golgi apparatus. It localises to the trans-Golgi network membrane. The protein resides in the cytoplasmic vesicle. The protein localises to the phagosome. It catalyses the reaction GTP + H2O = GDP + phosphate + H(+). With respect to regulation, regulated by guanine nucleotide exchange factors (GEFs) including DENND6A and DENND6B which promote the exchange of bound GDP for free GTP. Regulated by GTPase activating proteins (GAPs) which increase the GTP hydrolysis activity. Inhibited by GDP dissociation inhibitors (GDIs) which prevent Rab-GDP dissociation. In terms of biological role, the small GTPases Rab are key regulators of intracellular membrane trafficking, from the formation of transport vesicles to their fusion with membranes. Rabs cycle between an inactive GDP-bound form and an active GTP-bound form that is able to recruit to membranes different set of downstream effectors directly responsible for vesicle formation, movement, tethering and fusion. Involved in membrane trafficking between the Golgi complex and endosomes during early embryonic development. Regulates the Golgi to endosome transport of FGFR-containing vesicles during early development, a key process for developing basement membrane and epiblast and primitive endoderm lineages during early postimplantation development. May act by modulating the kinesin KIF16B-cargo association to endosomes. Regulates, together with its guanine nucleotide exchange factor DENND6A, the specific endocytic transport of ADAM10, N-cadherin/CDH2 shedding and cell-cell adhesion. Mediates endosomal tethering and fusion through the interaction with RUFY1 and RAB4B. Interaction with RAB11FIP1 may function in the process of neurite formation. The sequence is that of Ras-related protein Rab-14 (RAB14) from Sus scrofa (Pig).